Here is a 325-residue protein sequence, read N- to C-terminus: Collagen alpha-1(IX) chain (325 aa).

A compositionally biased stretch (low complexity) spans 1 to 54; the sequence is PGQLGNSGKPGQQGPPGEVGPRGPRGLPGSRGPVGPEGSPGIPGKLGPLGSPGL. 2 disordered regions span residues 1 to 163 and 187 to 325; these read PGQL…APTD and RPDT…GPDK. Pro residues predominate over residues 198–208; sequence RPGPPGPPGPP. Residues 237–249 are compositionally biased toward basic and acidic residues; that stretch reads PKGDLGEKGERGP. Pro residues predominate over residues 292–304; the sequence is VPGPPGPPGPPGF.

It belongs to the fibril-associated collagens with interrupted helices (FACIT) family. In terms of assembly, heterotrimer of an alpha 1(IX), an alpha 2(IX) and an alpha 3(IX) chain. In terms of processing, covalently linked to the telopeptides of type II collagen by lysine-derived cross-links. Post-translationally, prolines at the third position of the tripeptide repeating unit (G-X-Y) are hydroxylated in some or all of the chains.

The protein localises to the secreted. Its subcellular location is the extracellular space. It is found in the extracellular matrix. In terms of biological role, structural component of hyaline cartilage and vitreous of the eye. In Rattus norvegicus (Rat), this protein is Collagen alpha-1(IX) chain (Col9a1).